The following is a 131-amino-acid chain: Histone H2B.2 (131 aa).

Basic and acidic residues predominate over residues 1–19 (MSSAAEKKPASKAPAEKKP). The disordered stretch occupies residues 1-37 (MSSAAEKKPASKAPAEKKPAAKKTSTSVDGKKRSKVR). Lys7 and Lys8 each carry N6-acetyllysine; alternate. Residues Lys7 and Lys8 each participate in a glycyl lysine isopeptide (Lys-Gly) (interchain with G-Cter in SUMO); alternate cross-link. The residue at position 11 (Ser11) is a Phosphoserine. Residue Lys12 is modified to N6-acetyllysine. N6-acetyllysine; alternate is present on residues Lys17, Lys18, Lys22, and Lys23. Glycyl lysine isopeptide (Lys-Gly) (interchain with G-Cter in SUMO); alternate cross-links involve residues Lys17 and Lys18. Lys22 is modified (N6-butyryllysine; alternate). N6-methyllysine; alternate is present on Lys23. Position 35 is an N6-succinyllysine (Lys35). Lys38 carries the post-translational modification N6,N6-dimethyllysine. Lys47 carries the N6-succinyllysine modification. Lys124 is covalently cross-linked (Glycyl lysine isopeptide (Lys-Gly) (interchain with G-Cter in ubiquitin)).

It belongs to the histone H2B family. The nucleosome is a histone octamer containing two molecules each of H2A, H2B, H3 and H4 assembled in one H3-H4 heterotetramer and two H2A-H2B heterodimers. The octamer wraps approximately 147 bp of DNA. Interacts with NAP1. Monoubiquitinated by the RAD6/UBC2-BRE1 complex to form H2BK123ub1. H2BK123ub1 gives a specific tag for epigenetic transcriptional activation and is also prerequisite for H3K4me and H3K79me formation. H2BK123ub1 also modulates the formation of double-strand breaks during meiosis and is a prerequisite for DNA-damage checkpoint activation. Deubiquitination is performed by UBP8 in presence of SGF11. In terms of processing, phosphorylated by STE20 to form H2BS10ph during progression through meiotic prophase. May be correlated with chromosome condensation. H2BS10ph is also formed after H(2)O(2) treatment, and is a step leading to apoptosis. Post-translationally, acetylated by GCN5, a component of the SAGA complex, to form H2BK11ac and H2BK16ac. H2BK16ac can also be formed by ESA1, a component of the NuA4 histone acetyltransferase (HAT) complex. Acetylation of N-terminal lysines and particularly formation of H2BK11acK16ac has a positive effect on transcription. Sumoylation to form H2BK6su or H2BK7su, and probably also H2BK16su or H2BK17su, occurs preferentially near the telomeres and represses gene transcription.

Its subcellular location is the nucleus. The protein resides in the chromosome. Functionally, core component of nucleosome. Nucleosomes wrap and compact DNA into chromatin, limiting DNA accessibility to the cellular machineries which require DNA as a template. Histones thereby play a central role in transcription regulation, DNA repair, DNA replication and chromosomal stability. DNA accessibility is regulated via a complex set of post-translational modifications of histones, also called histone code, and nucleosome remodeling. This Saccharomyces cerevisiae (strain ATCC 204508 / S288c) (Baker's yeast) protein is Histone H2B.2 (HTB2).